The following is a 163-amino-acid chain: UPF0763 protein JJD26997_0796 (163 aa).

Belongs to the UPF0763 family.

This chain is UPF0763 protein JJD26997_0796, found in Campylobacter jejuni subsp. doylei (strain ATCC BAA-1458 / RM4099 / 269.97).